The chain runs to 139 residues: Non-structural protein 1 (139 aa).

Positions 136–139 match the DLNP; interaction with MAP1B motif; the sequence is DLNS.

The protein belongs to the pneumovirus non-structural protein 1 family. In terms of assembly, monomer. Homomultimer. Heteromultimer with NS2. Interacts with the matrix protein M. Interacts with host ELOC and CUL2; this interaction allows NS1 to form an active E3 ligase with ELOC and CUL2. Interacts with host IRF3; this interaction leads to the disrupted association of IRF3 with CREBBP and thus reduced binding of IRF3 to the IFN-beta promoter. Interacts with host MAVS; this interaction prevents MAVS binding to RIGI and inhibits signaling pathway leading to interferon production. Interacts with host MAP1B/microtubule-associated protein 1B. Interacts with host TRIM25 (via SPRY domain); this interaction suppresses RIGI ubiquitination and results in decreased interaction between RIGI and MAVS.

Its subcellular location is the host cytoplasm. It is found in the host mitochondrion. It localises to the host nucleus. Its function is as follows. Plays a major role in antagonizing the type I IFN-mediated antiviral response by degrading or inhibiting multiple cellular factors required for either IFN induction or response pathways. Acts cooperatively with NS2 to repress activation and nuclear translocation of host IFN-regulatory factor IRF3. Also disrupts the association of IRF3 with CREBBP. Interacts with host mitochondrial-associated membrane (MAM) MAVS and prevents the interaction with RIGI. Interacts with TRIM25 to suppress TRIM25-mediated RIGI ubiquitination and thereby RIGI-MAVS interaction. Together with NS2, participates in the proteasomal degradation of host STAT2, IRF3, IRF7, TBK1 and RIGI through a NS-degradasome involving CUL2 and Elongin-C. The degradasome requires an intact mitochondrial MAVS. Decreases the levels of host TRAF3 and IKBKE/IKK-epsilon. As functions other than disruptions of the type I IFN-mediated antiviral signaling pathways, induces host SOCS1 and SOCS3 expression. Suppresses premature apoptosis by an NF-kappa-B-dependent, interferon-independent mechanism and thus facilitates virus growth. Additionally, NS1 may serve some inhibitory role in viral transcription and RNA replication. Suppresses proliferation and activation of host CD103+ CD8+ cytotoxic T-lymphocytes and Th17 helper T-lymphocytes. This chain is Non-structural protein 1 (1C), found in Homo sapiens (Human).